Here is a 623-residue protein sequence, read N- to C-terminus: Chaperone protein HtpG (623 aa).

The tract at residues 1 to 341 is a; substrate-binding; that stretch reads MEKREFKAES…SQDLSLNISR (341 aa). The b stretch occupies residues 342–549; it reads EMLQHDRQLS…EGEVSIEMEK (208 aa). The tract at residues 550–623 is c; the sequence is ILSAMPNNQG…FTNDICKLMK (74 aa).

Belongs to the heat shock protein 90 family. Homodimer.

It localises to the cytoplasm. Functionally, molecular chaperone. Has ATPase activity. In Clostridium perfringens (strain 13 / Type A), this protein is Chaperone protein HtpG.